The following is a 408-amino-acid chain: Ribulose bisphosphate carboxylase/oxygenase activase, chloroplastic (408 aa).

A chloroplast-targeting transit peptide spans 1–32; sequence MQVTMKSSAVSGQRVGGARVATRSVRRAQLQV. ATP is bound at residue 138–145; sequence GGKGQGKT.

This sequence belongs to the RuBisCO activase family. As to quaternary structure, monomer.

Its subcellular location is the plastid. The protein resides in the chloroplast stroma. Activation of RuBisCO (ribulose-1,5-bisphosphate carboxylase/oxygenase; EC 4.1.1.39) involves the ATP-dependent carboxylation of the epsilon-amino group of lysine leading to a carbamate structure. In Chlamydomonas reinhardtii (Chlamydomonas smithii), this protein is Ribulose bisphosphate carboxylase/oxygenase activase, chloroplastic.